We begin with the raw amino-acid sequence, 192 residues long: UPF0301 protein Jann_3896 (192 aa).

It belongs to the UPF0301 (AlgH) family.

The polypeptide is UPF0301 protein Jann_3896 (Jannaschia sp. (strain CCS1)).